Here is a 430-residue protein sequence, read N- to C-terminus: Lipoyl synthase, mitochondrial (430 aa).

The N-terminal 37 residues, 1-37 (MATSAGKLRTLYSAHSSLSSLPPSARPTLQLATLRSY), are a transit peptide targeting the mitochondrion. The segment covering 39-55 (TTTPHDSPIGNTSNTPP) has biased composition (polar residues). Residues 39 to 59 (TTTPHDSPIGNTSNTPPTVKR) are disordered. The [4Fe-4S] cluster site is built by Cys-141, Cys-146, Cys-152, Cys-172, Cys-176, Cys-179, and Ser-387. Residues 155 to 376 (GSSKSAATAT…KERALEMGFL (222 aa)) enclose the Radical SAM core domain.

Belongs to the radical SAM superfamily. Lipoyl synthase family. The cofactor is [4Fe-4S] cluster.

It localises to the mitochondrion. It catalyses the reaction [[Fe-S] cluster scaffold protein carrying a second [4Fe-4S](2+) cluster] + N(6)-octanoyl-L-lysyl-[protein] + 2 oxidized [2Fe-2S]-[ferredoxin] + 2 S-adenosyl-L-methionine + 4 H(+) = [[Fe-S] cluster scaffold protein] + N(6)-[(R)-dihydrolipoyl]-L-lysyl-[protein] + 4 Fe(3+) + 2 hydrogen sulfide + 2 5'-deoxyadenosine + 2 L-methionine + 2 reduced [2Fe-2S]-[ferredoxin]. The protein operates within protein modification; protein lipoylation via endogenous pathway; protein N(6)-(lipoyl)lysine from octanoyl-[acyl-carrier-protein]: step 2/2. In terms of biological role, catalyzes the radical-mediated insertion of two sulfur atoms into the C-6 and C-8 positions of the octanoyl moiety bound to the lipoyl domains of lipoate-dependent enzymes, thereby converting the octanoylated domains into lipoylated derivatives. This chain is Lipoyl synthase, mitochondrial, found in Ajellomyces capsulatus (strain H143) (Darling's disease fungus).